Here is a 452-residue protein sequence, read N- to C-terminus: MSVKWKKTGKTTGELTFDISKDEIKLGLDQAFRRVKKNLHVPGFRKGHVSRVIFDQYYGEEALYEDALNIVLPNAYSAAVKEAGIAAVGQPQIVPVSMDKDKDWTMKATVTVEPEVKLGDYKGIEVPKQNTRVYQKDVDAELDKRREQNAELVLKKGKSAKGDTVTIDYKGTIDGKEFEGGSAENYSLELGSGAFIPGFEDQLIGHEAGDDVDVVVTFPKDYGAKDLAGKEAHFATKIHEVKSKQLPKLDDEFAKDVDDSVDTLDELKDKIKKQLKDQKEQAANDAIQEAAIEGAVKNATVDEIPDAMIQDDVDTQLNQYLGNMQRQGIDPQTYYKLTNTNEQQLRSQFAKNAAERVKTNLVLEAIVEKEGLKATKEEIDKEIKDLAAEYNMDEKTIRNTLSDDMLSHDITVRKAMDLVTDNAKQVAKAKLEAKEAEEAEDKEEAEDKKENK.

The PPIase FKBP-type domain occupies 162–247 (GDTVTIDYKG…IHEVKSKQLP (86 aa)). The tract at residues 427–452 (AKAKLEAKEAEEAEDKEEAEDKKENK) is disordered.

This sequence belongs to the FKBP-type PPIase family. Tig subfamily.

It localises to the cytoplasm. It catalyses the reaction [protein]-peptidylproline (omega=180) = [protein]-peptidylproline (omega=0). Functionally, involved in protein export. Acts as a chaperone by maintaining the newly synthesized protein in an open conformation. Functions as a peptidyl-prolyl cis-trans isomerase. This Lactobacillus helveticus (strain DPC 4571) protein is Trigger factor.